Consider the following 248-residue polypeptide: Malonyl-[acyl-carrier protein] O-methyltransferase 2 (248 aa).

The protein belongs to the methyltransferase superfamily.

It carries out the reaction malonyl-[ACP] + S-adenosyl-L-methionine = malonyl-[ACP] methyl ester + S-adenosyl-L-homocysteine. It participates in cofactor biosynthesis; biotin biosynthesis. In terms of biological role, converts the free carboxyl group of a malonyl-thioester to its methyl ester by transfer of a methyl group from S-adenosyl-L-methionine (SAM). It allows to synthesize pimeloyl-ACP via the fatty acid synthetic pathway. The protein is Malonyl-[acyl-carrier protein] O-methyltransferase 2 of Coxiella burnetii (strain RSA 493 / Nine Mile phase I).